The following is a 194-amino-acid chain: Imidazoleglycerol-phosphate dehydratase (194 aa).

This sequence belongs to the imidazoleglycerol-phosphate dehydratase family.

It localises to the cytoplasm. It carries out the reaction D-erythro-1-(imidazol-4-yl)glycerol 3-phosphate = 3-(imidazol-4-yl)-2-oxopropyl phosphate + H2O. Its pathway is amino-acid biosynthesis; L-histidine biosynthesis; L-histidine from 5-phospho-alpha-D-ribose 1-diphosphate: step 6/9. This chain is Imidazoleglycerol-phosphate dehydratase, found in Caldicellulosiruptor bescii (strain ATCC BAA-1888 / DSM 6725 / KCTC 15123 / Z-1320) (Anaerocellum thermophilum).